Here is a 324-residue protein sequence, read N- to C-terminus: Ribosomal RNA small subunit methyltransferase H (324 aa).

Residues 47–49 (GGH), D67, L96, D115, and Q122 contribute to the S-adenosyl-L-methionine site.

This sequence belongs to the methyltransferase superfamily. RsmH family.

It localises to the cytoplasm. It carries out the reaction cytidine(1402) in 16S rRNA + S-adenosyl-L-methionine = N(4)-methylcytidine(1402) in 16S rRNA + S-adenosyl-L-homocysteine + H(+). Its function is as follows. Specifically methylates the N4 position of cytidine in position 1402 (C1402) of 16S rRNA. The polypeptide is Ribosomal RNA small subunit methyltransferase H (Halorhodospira halophila (strain DSM 244 / SL1) (Ectothiorhodospira halophila (strain DSM 244 / SL1))).